A 150-amino-acid polypeptide reads, in one-letter code: MQIWVDADACPNVIKDVLFRAADRTQTQVTLVANQTIKVPPSRFIRTLRVSSGFDVADNEIVRRVEAGDLVITADIPLAAEVIEKGGAALNPRGERYTPDTIRERLNMRDFMDTMRASGIQTGGPSALSQRDRQQFANELDKWLHQAKKP.

The protein belongs to the UPF0178 family.

The chain is UPF0178 protein PC1_0756 from Pectobacterium carotovorum subsp. carotovorum (strain PC1).